Consider the following 638-residue polypeptide: Exocyst complex component EXO70A1 (638 aa).

Residues 163–190 (FDGLPNSLRPSSDGDGGGKPHGGHHNDD) are disordered.

Belongs to the EXO70 family. In terms of assembly, the exocyst complex is composed of SEC3, SEC5, SEC6, SEC8, SEC10, EXO70A1 and EXO84B. Interacts with SEC3A and EXO84B. Co-localizes with FPP3/VETH1, FPP2/VETH2 and COG2 in vesicle-like small motile compartments. May interact with COG2.

It is found in the cytoplasm. It localises to the cytosol. The protein localises to the cytoskeleton. The protein resides in the phragmoplast. Its subcellular location is the cell membrane. It is found in the secreted. It localises to the cell wall. Component of the exocyst complex involved in the docking of exocytic vesicles with fusion sites on the plasma membrane during regulated or polarized secretion. Involved in polarized cell growth and organ morphogenesis. Involved in polarized cell growth and organ morphogenesis. During cytokinesis, involved in cell plate initiation, cell plate maturation and formation of new primary cell wall. Participates in polarized pectin delivery required for the polarized development of the mucilage-producing volcano cells of the seed coat. Involved in the recycling and localization of auxin efflux carriers PIN1 and PIN2, and thus in polar auxin transport regulation. Functions in vesicle trafficking in tracheary elements to regulate patterned secondary cell wall (SCW) thickening. This chain is Exocyst complex component EXO70A1, found in Arabidopsis thaliana (Mouse-ear cress).